Reading from the N-terminus, the 305-residue chain is Homoserine O-succinyltransferase (305 aa).

Cys-142 functions as the Acyl-thioester intermediate in the catalytic mechanism. Residues Lys-163 and Ser-192 each contribute to the substrate site. The active-site Proton acceptor is the His-235. The active site involves Glu-237. Substrate is bound at residue Arg-249.

Belongs to the MetA family.

The protein resides in the cytoplasm. The enzyme catalyses L-homoserine + succinyl-CoA = O-succinyl-L-homoserine + CoA. It functions in the pathway amino-acid biosynthesis; L-methionine biosynthesis via de novo pathway; O-succinyl-L-homoserine from L-homoserine: step 1/1. Its function is as follows. Transfers a succinyl group from succinyl-CoA to L-homoserine, forming succinyl-L-homoserine. The sequence is that of Homoserine O-succinyltransferase from Psychromonas ingrahamii (strain DSM 17664 / CCUG 51855 / 37).